Consider the following 1205-residue polypeptide: A disintegrin and metalloproteinase with thrombospondin motifs 2 (1205 aa).

Residues Met1–Ala28 form the signal peptide. Residues Arg29–Arg253 constitute a propeptide that is removed on maturation. 2 N-linked (GlcNAc...) asparagine glycosylation sites follow: Asn104 and Asn245. Residues Tyr260–Pro464 enclose the Peptidase M12B domain. Intrachain disulfides connect Cys337–Cys386, Cys380–Cys459, Cys419–Cys445, Cys486–Cys511, Cys497–Cys520, Cys506–Cys539, Cys533–Cys544, Cys567–Cys604, Cys571–Cys609, and Cys582–Cys594. His402 is a Zn(2+) binding site. The active site involves Glu403. Zn(2+) is bound by residues His406 and His412. The 81-residue stretch at Gln474 to Arg554 folds into the Disintegrin domain. The 56-residue stretch at Asp555–Pro610 folds into the TSP type-1 1 domain. Positions Arg685 to Asp687 match the Cell attachment site motif. The tract at residues Lys717 to Asp845 is spacer. TSP type-1 domains lie at Val848–Glu906, Ser908–Leu968, and Cys969–Pro1023. 3 N-linked (GlcNAc...) asparagine glycosylation sites follow: Asn942, Asn943, and Asn987. 3 disulfides stabilise this stretch: Cys981-Cys1017, Cys985-Cys1022, and Cys996-Cys1006. N-linked (GlcNAc...) asparagine glycosylation occurs at Asn1025. Residues Ser1053–Asp1091 form the PLAC domain. N-linked (GlcNAc...) asparagine glycosylation is found at Asn1092, Asn1139, and Asn1144. The interval Gly1163–Thr1184 is disordered.

May belong to a multimeric complex. Binds specifically to collagen type XIV. Requires Zn(2+) as cofactor. The N-terminus is blocked. Post-translationally, the precursor is cleaved by a furin endopeptidase. In terms of processing, glycosylated. Can be O-fucosylated by POFUT2 on a serine or a threonine residue found within the consensus sequence C1-X(2)-(S/T)-C2-G of the TSP type-1 repeat domains where C1 and C2 are the first and second cysteine residue of the repeat, respectively. Fucosylated repeats can then be further glycosylated by the addition of a beta-1,3-glucose residue by the glucosyltransferase, B3GALTL. Fucosylation mediates the efficient secretion of ADAMTS family members. Can also be C-glycosylated with one or two mannose molecules on tryptophan residues within the consensus sequence W-X-X-W of the TPRs, and N-glycosylated. These other glycosylations can also facilitate secretion. Enzymatic activity is detected at high level in all type I collagen-rich tissues such as skin, bones, tendons and aorta and at low level in brain and thymus. The mRNA levels were disproportionately high in heart, liver, retina and muscle.

It is found in the secreted. Its subcellular location is the extracellular space. The protein localises to the extracellular matrix. The catalysed reaction is Cleaves the N-propeptide of collagen chain alpha1(I) at Pro-|-Gln and of alpha1(II) and alpha2(I) at Ala-|-Gln.. In terms of biological role, cleaves the propeptides of type I and II collagen prior to fibril assembly. Does not act on type III collagen. Cleaves lysyl oxidase LOX at a site downstream of its propeptide cleavage site to produce a short LOX form with reduced collagen-binding activity. The polypeptide is A disintegrin and metalloproteinase with thrombospondin motifs 2 (ADAMTS2) (Bos taurus (Bovine)).